The primary structure comprises 232 residues: Lipopolysaccharide core heptose(II) kinase WaaY (232 aa).

Belongs to the protein kinase superfamily. RfaY/WaaY family.

It carries out the reaction alpha-D-Glc-(1-&gt;3)-[L-alpha-D-Hep-(1-&gt;7)]-L-alpha-D-Hep-(1-&gt;3)-4-O-PO3(2-)-L-alpha-D-Hep-(1-&gt;5)-[alpha-Kdo-(2-&gt;4)]-alpha-Kdo-(2-&gt;6)-lipid A + ATP = alpha-D-Glc-(1-&gt;3)-[L-alpha-D-Hep-(1-&gt;7)]-4-O-PO3(2-)-L-alpha-D-Hep-(1-&gt;3)-4-O-PO3(2-)-L-alpha-D-Hep-(1-&gt;5)-[alpha-Kdo-(2-&gt;4)]-alpha-Kdo-(2-&gt;6)-lipid A + ADP + H(+). Its pathway is bacterial outer membrane biogenesis; LPS core biosynthesis. In terms of biological role, kinase involved in the biosynthesis of the core oligosaccharide region of lipopolysaccharide (LPS). Catalyzes the phosphorylation of the second heptose unit (HepII) of the inner core. The sequence is that of Lipopolysaccharide core heptose(II) kinase WaaY from Salmonella typhimurium (strain LT2 / SGSC1412 / ATCC 700720).